Consider the following 216-residue polypeptide: Leucyl/phenylalanyl-tRNA--protein transferase (216 aa).

Belongs to the L/F-transferase family.

It localises to the cytoplasm. It catalyses the reaction N-terminal L-lysyl-[protein] + L-leucyl-tRNA(Leu) = N-terminal L-leucyl-L-lysyl-[protein] + tRNA(Leu) + H(+). The catalysed reaction is N-terminal L-arginyl-[protein] + L-leucyl-tRNA(Leu) = N-terminal L-leucyl-L-arginyl-[protein] + tRNA(Leu) + H(+). The enzyme catalyses L-phenylalanyl-tRNA(Phe) + an N-terminal L-alpha-aminoacyl-[protein] = an N-terminal L-phenylalanyl-L-alpha-aminoacyl-[protein] + tRNA(Phe). In terms of biological role, functions in the N-end rule pathway of protein degradation where it conjugates Leu, Phe and, less efficiently, Met from aminoacyl-tRNAs to the N-termini of proteins containing an N-terminal arginine or lysine. The chain is Leucyl/phenylalanyl-tRNA--protein transferase from Maricaulis maris (strain MCS10) (Caulobacter maris).